The chain runs to 435 residues: Gamma-glutamyl phosphate reductase (435 aa).

Belongs to the gamma-glutamyl phosphate reductase family.

Its subcellular location is the cytoplasm. The enzyme catalyses L-glutamate 5-semialdehyde + phosphate + NADP(+) = L-glutamyl 5-phosphate + NADPH + H(+). Its pathway is amino-acid biosynthesis; L-proline biosynthesis; L-glutamate 5-semialdehyde from L-glutamate: step 2/2. Its function is as follows. Catalyzes the NADPH-dependent reduction of L-glutamate 5-phosphate into L-glutamate 5-semialdehyde and phosphate. The product spontaneously undergoes cyclization to form 1-pyrroline-5-carboxylate. In Synechococcus sp. (strain WH7803), this protein is Gamma-glutamyl phosphate reductase.